Reading from the N-terminus, the 352-residue chain is Holliday junction branch migration complex subunit RuvB (352 aa).

The interval 1-181 (MTDRIVGAAK…FGIPVRLHFY (181 aa)) is large ATPase domain (RuvB-L). ATP-binding positions include Leu20, Arg21, Gly62, Lys65, Thr66, Thr67, 128–130 (EDF), Arg171, Tyr181, and Arg218. Thr66 lines the Mg(2+) pocket. The tract at residues 182-252 (EVAELEGIVR…AADKALQRLE (71 aa)) is small ATPAse domain (RuvB-S). The segment at 255–352 (ELGLDALDHR…FDGDEENGSA (98 aa)) is head domain (RuvB-H). Positions 291, 310, and 315 each coordinate DNA.

The protein belongs to the RuvB family. As to quaternary structure, homohexamer. Forms an RuvA(8)-RuvB(12)-Holliday junction (HJ) complex. HJ DNA is sandwiched between 2 RuvA tetramers; dsDNA enters through RuvA and exits via RuvB. An RuvB hexamer assembles on each DNA strand where it exits the tetramer. Each RuvB hexamer is contacted by two RuvA subunits (via domain III) on 2 adjacent RuvB subunits; this complex drives branch migration. In the full resolvosome a probable DNA-RuvA(4)-RuvB(12)-RuvC(2) complex forms which resolves the HJ.

The protein localises to the cytoplasm. It catalyses the reaction ATP + H2O = ADP + phosphate + H(+). Functionally, the RuvA-RuvB-RuvC complex processes Holliday junction (HJ) DNA during genetic recombination and DNA repair, while the RuvA-RuvB complex plays an important role in the rescue of blocked DNA replication forks via replication fork reversal (RFR). RuvA specifically binds to HJ cruciform DNA, conferring on it an open structure. The RuvB hexamer acts as an ATP-dependent pump, pulling dsDNA into and through the RuvAB complex. RuvB forms 2 homohexamers on either side of HJ DNA bound by 1 or 2 RuvA tetramers; 4 subunits per hexamer contact DNA at a time. Coordinated motions by a converter formed by DNA-disengaged RuvB subunits stimulates ATP hydrolysis and nucleotide exchange. Immobilization of the converter enables RuvB to convert the ATP-contained energy into a lever motion, pulling 2 nucleotides of DNA out of the RuvA tetramer per ATP hydrolyzed, thus driving DNA branch migration. The RuvB motors rotate together with the DNA substrate, which together with the progressing nucleotide cycle form the mechanistic basis for DNA recombination by continuous HJ branch migration. Branch migration allows RuvC to scan DNA until it finds its consensus sequence, where it cleaves and resolves cruciform DNA. This is Holliday junction branch migration complex subunit RuvB from Parvibaculum lavamentivorans (strain DS-1 / DSM 13023 / NCIMB 13966).